The primary structure comprises 295 residues: Ribosomal protein L11 methyltransferase (295 aa).

S-adenosyl-L-methionine-binding residues include T150, G171, D193, and N232.

It belongs to the methyltransferase superfamily. PrmA family.

It localises to the cytoplasm. It catalyses the reaction L-lysyl-[protein] + 3 S-adenosyl-L-methionine = N(6),N(6),N(6)-trimethyl-L-lysyl-[protein] + 3 S-adenosyl-L-homocysteine + 3 H(+). Functionally, methylates ribosomal protein L11. The chain is Ribosomal protein L11 methyltransferase from Neisseria meningitidis serogroup A / serotype 4A (strain DSM 15465 / Z2491).